A 252-amino-acid polypeptide reads, in one-letter code: Ribosomal RNA small subunit methyltransferase J (252 aa).

S-adenosyl-L-methionine is bound by residues 101–102 (RD), 117–118 (ER), 153–154 (SS), and Asp-171.

It belongs to the methyltransferase superfamily. RsmJ family.

It localises to the cytoplasm. It catalyses the reaction guanosine(1516) in 16S rRNA + S-adenosyl-L-methionine = N(2)-methylguanosine(1516) in 16S rRNA + S-adenosyl-L-homocysteine + H(+). Specifically methylates the guanosine in position 1516 of 16S rRNA. This Salmonella choleraesuis (strain SC-B67) protein is Ribosomal RNA small subunit methyltransferase J.